The chain runs to 429 residues: Histidine--tRNA ligase (429 aa).

This sequence belongs to the class-II aminoacyl-tRNA synthetase family. As to quaternary structure, homodimer.

Its subcellular location is the cytoplasm. The enzyme catalyses tRNA(His) + L-histidine + ATP = L-histidyl-tRNA(His) + AMP + diphosphate + H(+). This is Histidine--tRNA ligase from Streptococcus mutans serotype c (strain ATCC 700610 / UA159).